Reading from the N-terminus, the 125-residue chain is Large ribosomal subunit protein bL17 (125 aa).

This sequence belongs to the bacterial ribosomal protein bL17 family. In terms of assembly, part of the 50S ribosomal subunit. Contacts protein L32.

The polypeptide is Large ribosomal subunit protein bL17 (Acinetobacter baumannii (strain AB0057)).